A 344-amino-acid polypeptide reads, in one-letter code: Phosphoribosylformylglycinamidine cyclo-ligase (344 aa).

The protein belongs to the AIR synthase family.

Its subcellular location is the cytoplasm. It carries out the reaction 2-formamido-N(1)-(5-O-phospho-beta-D-ribosyl)acetamidine + ATP = 5-amino-1-(5-phospho-beta-D-ribosyl)imidazole + ADP + phosphate + H(+). It participates in purine metabolism; IMP biosynthesis via de novo pathway; 5-amino-1-(5-phospho-D-ribosyl)imidazole from N(2)-formyl-N(1)-(5-phospho-D-ribosyl)glycinamide: step 2/2. The sequence is that of Phosphoribosylformylglycinamidine cyclo-ligase from Neisseria meningitidis serogroup B (strain ATCC BAA-335 / MC58).